The chain runs to 498 residues: Probable cytosol aminopeptidase (498 aa).

Positions 264 and 269 each coordinate Mn(2+). Lys-276 is an active-site residue. Mn(2+)-binding residues include Asp-287, Asp-346, and Glu-348. Residue Arg-350 is part of the active site.

The protein belongs to the peptidase M17 family. The cofactor is Mn(2+).

The protein localises to the cytoplasm. It catalyses the reaction Release of an N-terminal amino acid, Xaa-|-Yaa-, in which Xaa is preferably Leu, but may be other amino acids including Pro although not Arg or Lys, and Yaa may be Pro. Amino acid amides and methyl esters are also readily hydrolyzed, but rates on arylamides are exceedingly low.. It carries out the reaction Release of an N-terminal amino acid, preferentially leucine, but not glutamic or aspartic acids.. Functionally, presumably involved in the processing and regular turnover of intracellular proteins. Catalyzes the removal of unsubstituted N-terminal amino acids from various peptides. The chain is Probable cytosol aminopeptidase from Rhizobium rhizogenes (strain K84 / ATCC BAA-868) (Agrobacterium radiobacter).